The following is a 121-amino-acid chain: Large ribosomal subunit protein uL14c (121 aa).

Belongs to the universal ribosomal protein uL14 family. As to quaternary structure, part of the 50S ribosomal subunit.

Its subcellular location is the plastid. The protein localises to the organellar chromatophore. Functionally, binds to 23S rRNA. The sequence is that of Large ribosomal subunit protein uL14c from Paulinella chromatophora.